A 248-amino-acid polypeptide reads, in one-letter code: uncharacterized protein (248 aa).

Residues 30–50 (LIALAIFIGLIAIFMFGCKAA) form a helical membrane-spanning segment. Disordered stretches follow at residues 59–91 (NRDT…MDPP) and 208–248 (TTES…VSTR). Polar residues-rich tracts occupy residues 210–220 (ESPAPAQSTSN) and 239–248 (SLHNETVSTR).

The protein localises to the membrane. This is an uncharacterized protein from Caenorhabditis elegans.